The following is a 226-amino-acid chain: CRISPR-associated protein Cas5 (226 aa).

Belongs to the CRISPR-associated protein Cas5 family. Subtype I-A/Apern subfamily. Can form a Cascade complex with Csa5, Cas7, Cas3, Cas3' and Cas8a2.

In terms of biological role, CRISPR (clustered regularly interspaced short palindromic repeat) is an adaptive immune system that provides protection against mobile genetic elements (viruses, transposable elements and conjugative plasmids). CRISPR clusters contain spacers, sequences complementary to antecedent mobile elements, and target invading nucleic acids. CRISPR clusters are transcribed and processed into CRISPR RNA (crRNA). This is CRISPR-associated protein Cas5 (cas5a) from Thermoproteus tenax (strain ATCC 35583 / DSM 2078 / JCM 9277 / NBRC 100435 / Kra 1).